The primary structure comprises 857 residues: DNA mismatch repair protein MutS (857 aa).

Residue 603-610 participates in ATP binding; it reads GPNMAGKS.

This sequence belongs to the DNA mismatch repair MutS family.

This protein is involved in the repair of mismatches in DNA. It is possible that it carries out the mismatch recognition step. This protein has a weak ATPase activity. This chain is DNA mismatch repair protein MutS, found in Methanothrix thermoacetophila (strain DSM 6194 / JCM 14653 / NBRC 101360 / PT) (Methanosaeta thermophila).